The chain runs to 259 residues: Phosphatidylglycerol--prolipoprotein diacylglyceryl transferase (259 aa).

A run of 4 helical transmembrane segments spans residues 9–29 (IIFS…VIGI), 55–75 (FITY…VLLY), 92–112 (EGGM…YLFC), and 117–137 (INFL…LFLG). Residue R138 coordinates a 1,2-diacyl-sn-glycero-3-phospho-(1'-sn-glycerol). The next 3 membrane-spanning stretches (helical) occupy residues 172–192 (QLYE…YTTF), 201–221 (GLNS…IEIF), and 228–248 (IGFI…MLLL).

This sequence belongs to the Lgt family.

Its subcellular location is the cell inner membrane. It catalyses the reaction L-cysteinyl-[prolipoprotein] + a 1,2-diacyl-sn-glycero-3-phospho-(1'-sn-glycerol) = an S-1,2-diacyl-sn-glyceryl-L-cysteinyl-[prolipoprotein] + sn-glycerol 1-phosphate + H(+). Its pathway is protein modification; lipoprotein biosynthesis (diacylglyceryl transfer). Functionally, catalyzes the transfer of the diacylglyceryl group from phosphatidylglycerol to the sulfhydryl group of the N-terminal cysteine of a prolipoprotein, the first step in the formation of mature lipoproteins. The polypeptide is Phosphatidylglycerol--prolipoprotein diacylglyceryl transferase (Rickettsia conorii (strain ATCC VR-613 / Malish 7)).